The chain runs to 263 residues: Ret finger protein-like 4B (263 aa).

The RING-type zinc-finger motif lies at 11 to 53 (CPVCLDFFSCSISLSCTHVFCFDCIQRYILENHDFRAMCPLCR). The region spanning 76-263 (HNSRLEQSLH…ESGNVLTICP (188 aa)) is the B30.2/SPRY domain.

This chain is Ret finger protein-like 4B (RFPL4B), found in Homo sapiens (Human).